A 256-amino-acid polypeptide reads, in one-letter code: PHD finger protein ALFIN-LIKE 4 (256 aa).

The tract at residues 149–195 is disordered; that stretch reads QSKTANGSSKNKSGSKPPKRPNSDSKPQKQVQAKYEEENGGRGNGGD. Residues 154 to 164 show a composition bias toward low complexity; the sequence is NGSSKNKSGSK. The segment at 200–252 adopts a PHD-type zinc-finger fold; it reads ETICGACGEAYANGEFWICCDICETWFHGKCVRITPAKAEHIKHYKCPGCSNK.

The protein belongs to the Alfin family. Interacts with H3K4me3 and to a lesser extent with H3K4me2.

The protein localises to the nucleus. Histone-binding component that specifically recognizes H3 tails trimethylated on 'Lys-4' (H3K4me3), which mark transcription start sites of virtually all active genes. This chain is PHD finger protein ALFIN-LIKE 4, found in Oryza sativa subsp. indica (Rice).